Reading from the N-terminus, the 126-residue chain is Cystatin-like cysteine protease inhibitor EPIC1 (126 aa).

Residues 1–21 (MTFLRPILALLAATALVTTSA) form the signal peptide. Asn-46 carries N-linked (GlcNAc...) asparagine glycosylation. The short motif at 69–73 (QVVSG) is the Secondary area of contact element.

It belongs to the cystatin family. Interacts with the host papain-like cysteine protease RCR3. Interacts with the host papain-like cysteine protease C14.

Its subcellular location is the secreted. In terms of biological role, secreted effector that interacts with and inhibits the pathogenesis-related papain-like cysteine proteases C14 and RCR3 of host plants. Inhibition of host proteases by a pathogen extracellular protease inhibitor forms a specific type of defense-counterdefense mechanism between plants and microbial pathogens. The polypeptide is Cystatin-like cysteine protease inhibitor EPIC1 (Phytophthora infestans (Potato late blight agent)).